Reading from the N-terminus, the 115-residue chain is Large ribosomal subunit protein uL18 (115 aa).

Belongs to the universal ribosomal protein uL18 family. In terms of assembly, part of the 50S ribosomal subunit; part of the 5S rRNA/L5/L18/L25 subcomplex. Contacts the 5S and 23S rRNAs.

In terms of biological role, this is one of the proteins that bind and probably mediate the attachment of the 5S RNA into the large ribosomal subunit, where it forms part of the central protuberance. The chain is Large ribosomal subunit protein uL18 from Mycoplasma genitalium (strain ATCC 33530 / DSM 19775 / NCTC 10195 / G37) (Mycoplasmoides genitalium).